A 224-amino-acid polypeptide reads, in one-letter code: Oxalate oxidase GF-3.8 (224 aa).

The signal sequence occupies residues 1–23 (MGYSKNIASGMFAMLLLASAVLS). Cysteine 33 and cysteine 49 are disulfide-bonded. The region spanning 63–214 (SKLAKAGNTS…ALRVEAGVVE (152 aa)) is the Cupin type-1 domain. Asparagine 70 and asparagine 75 each carry an N-linked (GlcNAc...) asparagine glycan. 4 residues coordinate Mn(2+): histidine 111, histidine 113, glutamate 118, and histidine 160.

It belongs to the germin family. In terms of assembly, oligomer (believed to be a pentamer but probably hexamer).

The protein resides in the secreted. The protein localises to the extracellular space. Its subcellular location is the apoplast. It is found in the cytoplasm. It localises to the cell wall. It catalyses the reaction oxalate + O2 + 2 H(+) = H2O2 + 2 CO2. Produces developmental and stress-related release of hydrogen peroxide in the apoplast. May play an important role in several aspects of plant growth and defense mechanisms. This chain is Oxalate oxidase GF-3.8, found in Triticum aestivum (Wheat).